We begin with the raw amino-acid sequence, 92 residues long: Small ribosomal subunit protein uS19 (92 aa).

This sequence belongs to the universal ribosomal protein uS19 family.

In terms of biological role, protein S19 forms a complex with S13 that binds strongly to the 16S ribosomal RNA. This is Small ribosomal subunit protein uS19 from Polaromonas sp. (strain JS666 / ATCC BAA-500).